The chain runs to 286 residues: 33 kDa chaperonin (286 aa).

2 disulfides stabilise this stretch: Cys225–Cys227 and Cys258–Cys261.

It belongs to the HSP33 family. Post-translationally, under oxidizing conditions two disulfide bonds are formed involving the reactive cysteines. Under reducing conditions zinc is bound to the reactive cysteines and the protein is inactive.

It localises to the cytoplasm. Functionally, redox regulated molecular chaperone. Protects both thermally unfolding and oxidatively damaged proteins from irreversible aggregation. Plays an important role in the bacterial defense system toward oxidative stress. The chain is 33 kDa chaperonin from Shewanella sediminis (strain HAW-EB3).